The sequence spans 484 residues: Suppressor of fused homolog (484 aa).

The disordered stretch occupies residues 1–21; the sequence is MAELRPSVAPGPAAPPASGPS. Residues 12–21 show a composition bias toward pro residues; sequence PAAPPASGPS. Residue K257 forms a Glycyl lysine isopeptide (Lys-Gly) (interchain with G-Cter in ubiquitin) linkage. The disordered stretch occupies residues 279-360; that stretch reads SRPPEDEEDS…SSTAIIPHEL (82 aa). At S301 the chain carries Phosphoserine. K303 bears the N6-acetyllysine mark. Residue K321 forms a Glycyl lysine isopeptide (Lys-Gly) (interchain with G-Cter in SUMO2) linkage. A compositionally biased stretch (basic and acidic residues) spans 336–347; the sequence is THDRAPSRKDSL. A phosphoserine mark is found at S342, S346, and S352. At T353 the chain carries Phosphothreonine. The residue at position 481 (S481) is a Phosphoserine.

Belongs to the SUFU family. As to quaternary structure, may form homodimers. Interacts with ULK3; inactivating the protein kinase activity of ULK3. Interacts with RAB23. Part of a DNA-bound corepressor complex containing SAP18, GLI1 and SIN3. Part of a complex containing CTNNB1. Binds BTRC, GLI2, GLI3, SAP18 and STK36. Binds both free and DNA-bound GLI1. Interacts with KIF7. Interacts with GLI3FL and this interaction regulates the formation of either repressor or activator forms of GLI3. Its association with GLI3FL is regulated by Hh signaling and dissociation of the SUFU-GLI3 interaction requires the presence of the ciliary motor KIF3A. Post-translationally, polyubiquitinated at Lys-257 by the SCF(FBXL17) complex, leading to its subsequent degradation and allowing the release of GLI1 for proper hedgehog/smoothened signal transduction. Ubiquitination is impaired by phosphorylation at Ser-342, Ser-346, Ser-352 and Thr-353. Phosphorylation at Ser-342, Ser-346, Ser-352 and Thr-353 prevents ubiquitination by the SCF(FBXL17) complex. Widely expressed in adult and fetal tissues.

It localises to the cytoplasm. Its subcellular location is the nucleus. Negative regulator in the hedgehog/smoothened signaling pathway. Down-regulates GLI1-mediated transactivation of target genes. Part of a corepressor complex that acts on DNA-bound GLI1. May also act by linking GLI1 to BTRC and thereby targeting GLI1 to degradation by the proteasome. Sequesters GLI1, GLI2 and GLI3 in the cytoplasm, this effect is overcome by binding of STK36 to both SUFU and a GLI protein. Negative regulator of beta-catenin signaling. Regulates the formation of either the repressor form (GLI3R) or the activator form (GLI3A) of the full-length form of GLI3 (GLI3FL). GLI3FL is complexed with SUFU in the cytoplasm and is maintained in a neutral state. Without the Hh signal, the SUFU-GLI3 complex is recruited to cilia, leading to the efficient processing of GLI3FL into GLI3R. When Hh signaling is initiated, SUFU dissociates from GLI3FL and the latter translocates to the nucleus, where it is phosphorylated, destabilized, and converted to a transcriptional activator (GLI3A). Required for normal embryonic development. Required for the proper formation of hair follicles and the control of epidermal differentiation. This chain is Suppressor of fused homolog, found in Mus musculus (Mouse).